The chain runs to 338 residues: Oligopeptide transport ATP-binding protein OppD (338 aa).

The ABC transporter domain occupies 7 to 257 (LEAKQVSVAF…PKHPYTRSLL (251 aa)). An ATP-binding site is contributed by 43-50 (GESGSGKS).

The protein belongs to the ABC transporter superfamily. The complex is composed of two ATP-binding proteins (OppD and OppF), two transmembrane proteins (OppB and OppC) and a solute-binding protein (OppA).

It localises to the cell membrane. It catalyses the reaction a [peptide](out) + ATP + H2O = a [peptide](in) + ADP + phosphate + H(+). Its function is as follows. Part of the ABC transporter complex OppABCDF involved in the uptake of oligopeptides. Probably responsible for energy coupling to the transport system. Essential for uptake of peptides larger than three amino acids and for growth in milk. The sequence is that of Oligopeptide transport ATP-binding protein OppD (oppD) from Lactococcus lactis subsp. lactis (strain IL1403) (Streptococcus lactis).